Reading from the N-terminus, the 834-residue chain is MTGIGARTAWRNAVGRRPRNARRVSRIAYRVSRVACRVSRIAYRVSRIAYRVSRVAWRNVAPAARRAHRPFPAVIHIASGIPLPTEPLPAPPVVVDRPASPDDAALIAPDDLARLLRGEHDDPFAVLGIHAESSARDVVVRCLLPGAARVELIDAASARTLATLSPVGSGELHAIRLPAPGPLRYRLRAHYADTVRDLDDPYACTPWLGSLDCHLLARGEHRDAYRRLGAHPCVHDGLEGTAFALWAPNASCVSVVGSFNGWDARVHAMRKRIECGVWELFVPGVGCGALYKFALRTRDGDRLLKADPYARRTEAPPRTASRICAPSAFGWRDDAWMRERAAAQSAHAPIAIYEVHLDSWRRHPDGRAYSYDELADALIPYVAALGFTHVELLPIAEYPFAGSWGYQPVSLFAPSARWGEPDALRRFVERCHLAGLGVLLDWVPAHFPQDAHGLARFDGTHLYEHEDRRVGLHRGWNTLVYNLGRHEVANFLIANALYWLREFHFDGLRVDAVASMLYLDYDRDDGQWLPNVHGGRENLEAVAFLRRLNETVHADAPQGAITIAEESTAWPMVSAPVAAGGLGFDFKWNMGWMNDTLSFMRVDPIHRRFHLDRLTFGLLYAWSEQFVLALSHDEVVHAKGSLLAKMPGDAWQRHANLRLYLAFQYAHPGKKLLFMGSEFGQEREWNHDRELDWARLADPASAGVRRLVGDLNRLYRRRGCLHRRDADSRGFRWIDCADSHQTVIAWRRIGDAPDDFVVVVCNFTPQPRTGYRIGVPAAGFYRELLNSDAADYGGSGLGNLGGVSSEPVPMHGEPHSLSLLLPPLAALVFAAPGH.

Asp511 acts as the Nucleophile in catalysis. Glu565 (proton donor) is an active-site residue.

Belongs to the glycosyl hydrolase 13 family. GlgB subfamily. In terms of assembly, monomer.

The catalysed reaction is Transfers a segment of a (1-&gt;4)-alpha-D-glucan chain to a primary hydroxy group in a similar glucan chain.. The protein operates within glycan biosynthesis; glycogen biosynthesis. Catalyzes the formation of the alpha-1,6-glucosidic linkages in glycogen by scission of a 1,4-alpha-linked oligosaccharide from growing alpha-1,4-glucan chains and the subsequent attachment of the oligosaccharide to the alpha-1,6 position. This Burkholderia thailandensis (strain ATCC 700388 / DSM 13276 / CCUG 48851 / CIP 106301 / E264) protein is 1,4-alpha-glucan branching enzyme GlgB (glgB).